A 407-amino-acid polypeptide reads, in one-letter code: Argininosuccinate synthase (407 aa).

ATP contacts are provided by residues 16–24 (AYSGGLDTS) and Ala44. Residues Tyr96 and Ser101 each coordinate L-citrulline. Residue Gly126 coordinates ATP. L-aspartate-binding residues include Thr128, Asn132, and Asp133. Position 132 (Asn132) interacts with L-citrulline. Positions 136, 185, 194, 270, and 282 each coordinate L-citrulline.

This sequence belongs to the argininosuccinate synthase family. Type 1 subfamily. As to quaternary structure, homotetramer.

It localises to the cytoplasm. It carries out the reaction L-citrulline + L-aspartate + ATP = 2-(N(omega)-L-arginino)succinate + AMP + diphosphate + H(+). It functions in the pathway amino-acid biosynthesis; L-arginine biosynthesis; L-arginine from L-ornithine and carbamoyl phosphate: step 2/3. The polypeptide is Argininosuccinate synthase (Shewanella frigidimarina (strain NCIMB 400)).